The sequence spans 501 residues: Actin-binding protein WASF3 (501 aa).

A coiled-coil region spans residues 57-93 (NEANNFYIRANSLQDRIDRLAVKVTQLDSTVEEVSLQ). Tyr-151 carries the post-translational modification Phosphotyrosine; by ABL1. The stretch at 162–206 (KEKMLQDTEDKRKEKRRQKEQKRVDGTTREVKKVRKARNRRQEWN) forms a coiled coil. The disordered stretch occupies residues 170-443 (EDKRKEKRRQ…PPISDARSDL (274 aa)). Residues 182-192 (QKRVDGTTREV) show a composition bias toward basic and acidic residues. Residues 219–237 (RLSQSVHHGASSEGSLSPD) show a composition bias toward polar residues. Tyr-248 carries the phosphotyrosine; by ABL1 modification. Polar residues predominate over residues 256–267 (HALQAQPATPSY). Positions 302 to 312 (QQPPPPPPPQA) are enriched in pro residues. Tyr-337 is modified (phosphotyrosine; by ABL1). Pro residues-rich tracts occupy residues 341–352 (SGPPPPPPPPMI) and 394–410 (APPPPGPPPPPPGPPGP). Residues 411-422 (SSLSSSPMHGPP) show a composition bias toward low complexity. A WH2 domain is found at 439 to 456 (ARSDLLAAIRMGIQLKKV). A Phosphotyrosine; by ABL1 modification is found at Tyr-485.

It belongs to the SCAR/WAVE family. In terms of assembly, binds actin and the Arp2/3 complex. Post-translationally, phosphorylation by ABL1 promotes lamellipodia formation and cell migration.

The protein localises to the cytoplasm. It is found in the cytoskeleton. Functionally, downstream effector molecules involved in the transmission of signals from tyrosine kinase receptors and small GTPases to the actin cytoskeleton. Plays a role in the regulation of cell morphology and cytoskeletal organization. Required in the control of cell shape. The protein is Actin-binding protein WASF3 (Wasf3) of Mus musculus (Mouse).